A 497-amino-acid chain; its full sequence is Subtilisin-like protease CPC735_031240 (497 aa).

Residues 1–16 form the signal peptide; that stretch reads MKGVLSLSLLPLLAAP. Positions 17-136 are excised as a propeptide; the sequence is SPILVDTIHR…IEKDSEVHAW (120 aa). Residues 43-134 form the Inhibitor I9 domain; the sequence is SYIVVFKKNV…QYIEKDSEVH (92 aa). The 307-residue stretch at 146–452 folds into the Peptidase S8 domain; the sequence is PWGLARVSHR…GGSSNYTAII (307 aa). Active-site charge relay system residues include D182 and H214. N244 and N284 each carry an N-linked (GlcNAc...) asparagine glycan. The Charge relay system role is filled by S380. N-linked (GlcNAc...) asparagine glycosylation is present at N447.

Belongs to the peptidase S8 family.

The protein localises to the secreted. Secreted subtilisin-like serine protease with keratinolytic activity that contributes to pathogenicity. In Coccidioides posadasii (strain C735) (Valley fever fungus), this protein is Subtilisin-like protease CPC735_031240.